The chain runs to 201 residues: uncharacterized protein (201 aa).

An N-terminal signal peptide occupies residues 1-25 (MYRAGVTLLVVAVVSLGRWDVVTMA). Residues 26 to 170 (AAIGIGWYEP…AYFRRSNHRA (145 aa)) lie on the Extracellular side of the membrane. N46, N49, N55, N84, N95, N113, N122, N137, and N144 each carry an N-linked (GlcNAc...) asparagine; by host glycan. A helical transmembrane segment spans residues 171-191 (FMIVILTQVVFVVFIINASFI). The Cytoplasmic portion of the chain corresponds to 192–201 (WSWTFRRHKR).

This sequence belongs to the HHV-5 UL120 protein family.

Its subcellular location is the host membrane. This is an uncharacterized protein from Homo sapiens (Human).